The following is a 66-amino-acid chain: Cytoplasmic envelopment protein 3 (66 aa).

The N-myristoyl glycine; by host moiety is linked to residue G2.

The protein belongs to the herpesviridae cytoplasmic envelopment protein 3 family. Interacts with cytoplasmic envelopment protein 2; this interaction is essential for the proper localization of each protein to the assembly complex and thus for the production of infectious virus. Phosphorylated. Phosphorylation does not seem to be required for recycling to the host Golgi apparatus. Packaging is selective for underphosphorylated forms.

It is found in the virion tegument. Its subcellular location is the virion membrane. It localises to the host cell membrane. The protein resides in the host Golgi apparatus membrane. Plays an important role in the cytoplasmic envelopment of tegument proteins and capsids during the assembly and egress processes. Also participates in viral entry at the fusion step probably by regulating the core fusion machinery. This Saimiriine herpesvirus 2 (strain 11) (SaHV-2) protein is Cytoplasmic envelopment protein 3 (38).